Consider the following 465-residue polypeptide: 23S rRNA (uracil(1939)-C(5))-methyltransferase RlmD (465 aa).

The segment at M1–A22 is disordered. One can recognise a TRAM domain in the interval P16–D80. [4Fe-4S] cluster contacts are provided by C93, C99, C102, and C181. S-adenosyl-L-methionine contacts are provided by Q289, F318, N323, E339, N367, and D388. C421 functions as the Nucleophile in the catalytic mechanism.

The protein belongs to the class I-like SAM-binding methyltransferase superfamily. RNA M5U methyltransferase family. RlmD subfamily.

The catalysed reaction is uridine(1939) in 23S rRNA + S-adenosyl-L-methionine = 5-methyluridine(1939) in 23S rRNA + S-adenosyl-L-homocysteine + H(+). Its function is as follows. Catalyzes the formation of 5-methyl-uridine at position 1939 (m5U1939) in 23S rRNA. The polypeptide is 23S rRNA (uracil(1939)-C(5))-methyltransferase RlmD (Burkholderia lata (strain ATCC 17760 / DSM 23089 / LMG 22485 / NCIMB 9086 / R18194 / 383)).